Consider the following 430-residue polypeptide: MNVKVENIEKNVVKLEITVDSEKFNEAVKKSFKKNAKRFNVPGFRKGKAPLNIIKKYYGEGVLFEDAINFCCEDTYPKAIEENNIKPVDYPQIDVVQIGEGKDFIYTAEVTTVPKVKLGEYKGVEVKKVSYEVEDEAVENELKSMQEKNARVSLKEEGEIEKGNIAIIDFKGYVDGKAFEGGEAKDYEIEIGSGTFIGDFEDQLVGLKKDESKEVNVSFPEEYGREDLNGKPATFEVTIKDIKVKELPALDDEFAKEVSEFDTLEELKSDIKDRMKKELSEKAKAEYEEAVVEAVGANAEIEIPKVMIEKEIENMVRDLEMRLKYQGLDLKSYYEFTNSSEEKVKEYMRETAEKRVKTDLIMQEIAKVEDIKATEEELKEKAMEVAKQYGQKDVEKTAELIANAQKAYLEIDIVNGKVLDLLVESSKEIA.

Residues 163-248 (GNIAIIDFKG…IKDIKVKELP (86 aa)) enclose the PPIase FKBP-type domain.

It belongs to the FKBP-type PPIase family. Tig subfamily.

The protein localises to the cytoplasm. The catalysed reaction is [protein]-peptidylproline (omega=180) = [protein]-peptidylproline (omega=0). Its function is as follows. Involved in protein export. Acts as a chaperone by maintaining the newly synthesized protein in an open conformation. Functions as a peptidyl-prolyl cis-trans isomerase. The sequence is that of Trigger factor from Clostridium botulinum (strain Kyoto / Type A2).